The chain runs to 1748 residues: WD repeat-containing protein 90 (1748 aa).

Positions 1 to 207 (MARAWQHPFL…VTPMPREMAF (207 aa)) are binds with microtubules. Residue serine 241 is modified to Phosphoserine. The interval 274–308 (QTPSPTASGRAALAPRPFPEVSLSQERSDASNADG) is disordered. WD repeat units lie at residues 407-450 (GHTD…CLFR), 452-494 (PMHV…LGGE), 501-541 (AHTD…LRSC), 615-654 (SSGP…VLLE), 656-695 (EHEG…YHML), 698-737 (SHTA…QLYD), 740-779 (SSED…VLVE), 782-821 (CHRG…WHVL), 882-922 (SRLD…IIRE), 926-964 (VHPE…SPGP), 969-1009 (GHSE…QSFP), 1156-1201 (GHSA…CQHL), 1204-1245 (PHST…LVSS), 1247-1286 (RLPE…ADIS), 1298-1326 (VGAG…VCVW), 1327-1376 (DTRA…ELRC), 1433-1472 (GHRS…LVIQ), 1475-1520 (VLNQ…MELK), 1523-1562 (PHPV…TFRV), 1568-1614 (GAPI…NHCE), and 1715-1748 (GHDN…VPGL). Residues 1004-1071 (SDQSFPGAPP…GARDTRNSGA (68 aa)) are disordered.

This sequence belongs to the WD repeat WDR90/POC16 family.

Its subcellular location is the cytoplasm. The protein localises to the cytoskeleton. The protein resides in the microtubule organizing center. It is found in the centrosome. It localises to the centriole. Its subcellular location is the centriolar satellite. Its function is as follows. Microtubule-binding protein that plays a crucial role in ensuring inner core protein localization within the centriole core, as well as in maintaining the microtubule wall integrity and the overall centriole roundness and stability. Required for efficient primary cilium formation. This is WD repeat-containing protein 90 (WDR90) from Homo sapiens (Human).